Here is a 349-residue protein sequence, read N- to C-terminus: Protein-glutamate methylesterase/protein-glutamine glutaminase (349 aa).

Positions 5-122 (RVLCVDDSAL…REGMLAYSEL (118 aa)) constitute a Response regulatory domain. The residue at position 56 (Asp56) is a 4-aspartylphosphate. The 193-residue stretch at 152–344 (LLSSEKLIAI…QRMLAQISSG (193 aa)) folds into the CheB-type methylesterase domain. Active-site residues include Ser164, His190, and Asp286.

It belongs to the CheB family. Phosphorylated by CheA. Phosphorylation of the N-terminal regulatory domain activates the methylesterase activity.

It localises to the cytoplasm. It catalyses the reaction [protein]-L-glutamate 5-O-methyl ester + H2O = L-glutamyl-[protein] + methanol + H(+). It carries out the reaction L-glutaminyl-[protein] + H2O = L-glutamyl-[protein] + NH4(+). Functionally, involved in chemotaxis. Part of a chemotaxis signal transduction system that modulates chemotaxis in response to various stimuli. Catalyzes the demethylation of specific methylglutamate residues introduced into the chemoreceptors (methyl-accepting chemotaxis proteins or MCP) by CheR. Also mediates the irreversible deamidation of specific glutamine residues to glutamic acid. The polypeptide is Protein-glutamate methylesterase/protein-glutamine glutaminase (Yersinia pseudotuberculosis serotype I (strain IP32953)).